The following is a 410-amino-acid chain: D-3-phosphoglycerate dehydrogenase (410 aa).

NAD(+)-binding positions include 162-163 (HI), Asp182, 239-241 (AAR), and Asp265. The active site involves Arg241. Glu270 is a catalytic residue. His293 acts as the Proton donor in catalysis. 293–296 (HIGG) lines the NAD(+) pocket. The ACT domain occupies 341-410 (RLLHIHENRP…DGTIRARVLY (70 aa)).

Belongs to the D-isomer specific 2-hydroxyacid dehydrogenase family.

It carries out the reaction (2R)-3-phosphoglycerate + NAD(+) = 3-phosphooxypyruvate + NADH + H(+). The catalysed reaction is (R)-2-hydroxyglutarate + NAD(+) = 2-oxoglutarate + NADH + H(+). It functions in the pathway amino-acid biosynthesis; L-serine biosynthesis; L-serine from 3-phospho-D-glycerate: step 1/3. With respect to regulation, in bacteria displays feedback inhibition by L-serine. Functionally, catalyzes the reversible oxidation of 3-phospho-D-glycerate to 3-phosphonooxypyruvate, the first step of the phosphorylated L-serine biosynthesis pathway. Also catalyzes the reversible oxidation of 2-hydroxyglutarate to 2-oxoglutarate. The chain is D-3-phosphoglycerate dehydrogenase (serA) from Haemophilus influenzae (strain ATCC 51907 / DSM 11121 / KW20 / Rd).